Consider the following 184-residue polypeptide: MLPICVVNNYGQFNHLIHRALRDLDIDAVLIPNTTPREEIASQYRGIILGGGPDIARAGVCAEYLDLGIPVLGICLGLHIIARKFGGVVHPGKSGGYGSVEVTIREHDDILSGYPDIIPVWASHADEVCRIPEGFTLLASSGICEVEAVACPRKRIYGLQWHPEVSHTVGGKRVYENFDAICTE.

Residues 3-184 (PICVVNNYGQ…YENFDAICTE (182 aa)) enclose the Glutamine amidotransferase type-1 domain. Cys-75 functions as the Nucleophile in the catalytic mechanism. Active-site residues include His-162 and Glu-164.

In terms of assembly, heterodimer composed of a glutamine amidotransferase subunit (A) and a GMP-binding subunit (B).

The catalysed reaction is XMP + L-glutamine + ATP + H2O = GMP + L-glutamate + AMP + diphosphate + 2 H(+). The protein operates within purine metabolism; GMP biosynthesis; GMP from XMP (L-Gln route): step 1/1. Catalyzes the synthesis of GMP from XMP. The polypeptide is GMP synthase [glutamine-hydrolyzing] subunit A (Methanoregula boonei (strain DSM 21154 / JCM 14090 / 6A8)).